Reading from the N-terminus, the 1177-residue chain is Zinc finger CCCH domain-containing protein 6 (1177 aa).

Residues 1 to 12 (MTDSEHAGHDRE) show a composition bias toward basic and acidic residues. Disordered regions lie at residues 1–137 (MTDS…SKEY) and 179–206 (QESS…TEYR). Acidic residues predominate over residues 13-31 (DGELEDGEIDDAGFEETQD). Residues 27 to 73 (EETQDQEAKENEKQKNEKAYRKSRKKHKKEREKKKSKRRKHEKHKHN) are a coiled coil. Basic and acidic residues predominate over residues 32 to 46 (QEAKENEKQKNEKAY). Over residues 47–73 (RKSRKKHKKEREKKKSKRRKHEKHKHN) the composition is skewed to basic residues. The span at 179-188 (QESSGSSFSK) shows a compositional bias: low complexity. C3H1-type zinc fingers lie at residues 271–297 (KGKQ…HDAE), 299–326 (EKKK…HSEF), and 327–350 (PCKF…HDDL). Residues 347 to 383 (HDDLTKETRKLLDKVLNADEELVNEDERELEELRKRG) adopt a coiled-coil conformation. 8 disordered regions span residues 383–416 (GITP…FETD), 446–587 (PPAF…ESMQ), 622–654 (QQQP…SASG), 670–767 (RYQE…KKPH), 780–826 (PKKL…SERE), 942–988 (EQSG…SSRS), 1043–1101 (DPRD…PVDG), and 1132–1162 (LLRP…DKPL). Low complexity predominate over residues 493–502 (HPGSPGHHPC). Polar residues-rich tracts occupy residues 512–522 (ENPSLLPSSSE) and 564–587 (SSPA…ESMQ). The span at 713–728 (RTLQKQTGTLRNQQLP) shows a compositional bias: polar residues. A compositionally biased stretch (basic and acidic residues) spans 753-767 (PRLRTVPRQDIKKPH). Basic and acidic residues predominate over residues 955-967 (GDPRLQKNFDPRL). Polar residues-rich tracts occupy residues 1050-1064 (LSAT…GENT) and 1077-1093 (KNQP…NTTA). S1150 carries the post-translational modification Phosphoserine.

This Mus musculus (Mouse) protein is Zinc finger CCCH domain-containing protein 6 (Zc3h6).